The following is a 246-amino-acid chain: MKIYLKFKSYNKRICKLLQLFKLEHDQNCSMGLLINHNSLELYNRENVNQKPIKVDFTSKKNHYRCHHFRRKNEVLYRVSGIKNSYFPTVLDATAGLGNDAFIFSFLGCKVIMIERHPIVAALLKDGLQRGYQDKKIGHWLQTRLHLIVNDSLKMLEIPILQPDVIYLDPMYPFYHKKSLPKKDMQFFRQLIGHNYDSKKLLEVSRKLAKNRIIVKRPYYAKPLSEDKVNHIVTTRNHRFDIYQPF.

S-adenosyl-L-methionine-binding positions include 115–116 (ER) and aspartate 169.

The protein belongs to the methyltransferase superfamily. RsmJ family.

Its subcellular location is the cytoplasm. The catalysed reaction is guanosine(1516) in 16S rRNA + S-adenosyl-L-methionine = N(2)-methylguanosine(1516) in 16S rRNA + S-adenosyl-L-homocysteine + H(+). Functionally, specifically methylates the guanosine in position 1516 of 16S rRNA. This is Ribosomal RNA small subunit methyltransferase J from Buchnera aphidicola subsp. Acyrthosiphon pisum (strain Tuc7).